Consider the following 880-residue polypeptide: DNA mismatch repair protein MutS (880 aa).

625 to 632 serves as a coordination point for ATP; sequence GPNMAGKS.

It belongs to the DNA mismatch repair MutS family.

Functionally, this protein is involved in the repair of mismatches in DNA. It is possible that it carries out the mismatch recognition step. This protein has a weak ATPase activity. This chain is DNA mismatch repair protein MutS, found in Alkaliphilus oremlandii (strain OhILAs) (Clostridium oremlandii (strain OhILAs)).